Here is a 490-residue protein sequence, read N- to C-terminus: Cytochrome P450 2C12, female-specific (490 aa).

Cys435 contacts heme.

Belongs to the cytochrome P450 family. It depends on heme as a cofactor.

Its subcellular location is the endoplasmic reticulum membrane. It localises to the microsome membrane. It catalyses the reaction an organic molecule + reduced [NADPH--hemoprotein reductase] + O2 = an alcohol + oxidized [NADPH--hemoprotein reductase] + H2O + H(+). Its function is as follows. This P450 is active in 15-beta-hydroxylation of steroid sulfates. In Rattus norvegicus (Rat), this protein is Cytochrome P450 2C12, female-specific (Cyp2c12).